A 662-amino-acid chain; its full sequence is ATP-dependent RNA helicase DDX3X (662 aa).

Serine 2 is modified (N-acetylserine). The required for TBK1 and IKBKE-dependent IFNB1 activation stretch occupies residues 2–139 (SHVAVENALG…KSDEDDWSKP (138 aa)). The Nuclear export signal motif lies at 12–21 (LDQQFAGLDL). The tract at residues 19 to 144 (LDLNSSDNQS…DWSKPLPPSE (126 aa)) is disordered. Polar residues predominate over residues 21 to 34 (LNSSDNQSGGSTAS). The interaction with EIF4E stretch occupies residues 38 to 44 (YIPPHLR). Basic and acidic residues predominate over residues 44 to 68 (RNREATKGFYDKDSSGWSSSKDKDA). Lysine 55 is modified (N6-acetyllysine). A compositionally biased stretch (low complexity) spans 70–89 (SSFGSRSDSRGKSSFFSDRG). The segment at 81 to 90 (KSSFFSDRGS) is interaction with VACV protein K7. Phosphoserine is present on residues serine 82, serine 86, and serine 90. Positions 88–123 (RGSGSRGRFDDRGRSDYDGIGSRGDRSGFGKFERGG) are involved in binding to RNA G-quadruplex. The span at 94 to 130 (GRFDDRGRSDYDGIGSRGDRSGFGKFERGGNSRWCDK) shows a compositional bias: basic and acidic residues. The tract at residues 100–110 (GRSDYDGIGSR) is interaction with IKBKE. Positions 100 to 662 (GRSDYDGIGS…NSQGVDWWGN (563 aa)) are interaction with GSK3B. Arginine 101 bears the Omega-N-methylarginine mark. The residue at position 102 (serine 102) is a Phosphoserine; by IKKE. Tyrosine 104 carries the post-translational modification Phosphotyrosine. Residue arginine 110 is modified to Omega-N-methylarginine. Residue lysine 118 is modified to N6-acetyllysine. Position 131 is a phosphoserine (serine 131). The interval 139–172 (PLPPSERLEQELFSGGNTGINFEKYDDIPVEATG) is interaction with CHUK. The Q motif motif lies at 180 to 208 (ESFSDVEMGEIIMGNIELTRYTRPTPVQK). A Phosphoserine; by TBK1; in vitro modification is found at serine 181. Serine 183 carries the post-translational modification Phosphoserine; by TBK1. 200 to 207 (YTRPTPVQ) provides a ligand contact to ATP. The region spanning 211 to 403 (IPIIKEKRDL…RDFLDEYIFL (193 aa)) is the Helicase ATP-binding domain. A Glycyl lysine isopeptide (Lys-Gly) (interchain with G-Cter in SUMO2) cross-link involves residue lysine 215. 224 to 231 (AQTGSGKT) serves as a coordination point for ATP. The residue at position 240 (serine 240) is a Phosphoserine; by TBK1; in vitro. The involved in stimulation of ATPase activity by DNA and RNA, nucleic acid binding and unwinding and HIV-1 replication stretch occupies residues 250–259 (ALRAMKENGR). Phosphoserine; by TBK1; in vitro is present on serine 269. The DEAD box signature appears at 347–350 (DEAD). The interaction with HCV core protein stretch occupies residues 409-662 (GSTSENITQK…NSQGVDWWGN (254 aa)). One can recognise a Helicase C-terminal domain in the interval 414 to 575 (NITQKVVWVE…EVPSWLENMA (162 aa)). Serine 429 carries the post-translational modification Phosphoserine; by CSNK1E and TBK1; in vitro. Threonine 438 is subject to Phosphothreonine; by TBK1; in vitro. Phosphoserine; by TBK1; in vitro occurs at positions 442 and 456. Threonine 469 carries the phosphothreonine; by CSNK1E; in vitro modification. A Phosphoserine; by CSNK1E; in vitro modification is found at serine 470. Serine 520 is subject to Phosphoserine; by TBK1; in vitro. The segment at 536 to 661 (GNLGLATSFF…YNSQGVDWWG (126 aa)) is interaction with NXF1. A Phosphothreonine; by TBK1; in vitro modification is found at threonine 542. Residue serine 543 is modified to Phosphoserine; by CSNK1E and TBK1; in vitro. The residue at position 592 (arginine 592) is an Omega-N-methylarginine. Serine 594, serine 605, and serine 612 each carry phosphoserine. The tract at residues 601–634 (DYRQSSGASSSSFSSSRASSSRSGGGGHGSSRGF) is disordered. Residues 604-622 (QSSGASSSSFSSSRASSSR) are compositionally biased toward low complexity. Residues arginine 617 and arginine 632 each carry the omega-N-methylarginine modification. Residues 623 to 634 (SGGGGHGSSRGF) show a composition bias toward gly residues.

The protein belongs to the DEAD box helicase family. DDX3/DED1 subfamily. Homodimer; can bind RNA as a monomer and as a dimer/oligomer. Interacts with TDRD3. Interacts (when phosphorylated at Ser-102) with IRF3; the interaction facilitates the phosphorylation and activation of IRF3 by IKBKE. Directly interacts with XPO1/CRM1. The interaction with XPO1/CMR1 is dependent on the DDX3X nuclear export signal motif and XPO1 interaction with GTPase RAN in its active GTP-bound form. Weakly interacts with TBKBP1/SINTBAD. Directly interacts with TRAF3; this interaction stimulates TRAF3 'Lys-63' ubiquitination. Interacts with CSNK1E in a Wnt-dependent manner; this interaction greatly enhances CSNK1E affinity for ATP, stimulates its kinase activity and promotes CSNK1E-mediated DVL2 phosphorylation. In the presence of RNA, the interaction is decreased. Also interacts with CSNK1D and stimulates its kinase activity. Interacts with TRPV4; this interaction is decreased when the TRPV4 channel is activated, leading to DDX3X relocalization to the nucleus. Interacts with MAP3K14/NIK. Directly interacts with CHUK/IKKA after physiological activation of the TLR7 and TLR8 pathways; this interaction enhances CHUK autophosphorylation. May associate with EIF4F complex, composed of at least EIF4A, EIF4E and EIF4G1/EIF4G3. Directly interacts with EIF4E in an RNA-independent manner; this interaction enhances EIF4E cap-binding ability. Directly interacts with EIF4G1 in an RNA-independent manner. DDX3X competes with EIF4G1 for interaction with EIF4E. Interacts with EIF4A1 and EIF2S1 in an RNA-independent manner. Associates with the eukaryotic translation initiation factor 3 (eIF-3) complex, including with EIF3B and EIF3C subunits. Directly interacts with IKBKE/IKKE; this interaction stimulates IKBKE activating autophosphorylation and is induced upon viral infection. Interacts with TBK1. Interacts with SP1; this interaction potentiates SP1-induced CDKN1A/WAF1/CIP1 transcription. Interacts with GSK3A and GSK3B. Interacts with several death receptors, inclusing FAS, TNFRSF10A and TNFRSF10B. Recruited to TNFRSF10B in the absence of receptor stimulation. When TNFRSF10B is stimulated, further recruited to the receptor and cleaved by caspases. A large proteolytic fragment remains associated with TNFRSF10B. Interacts (via C-terminus) with NXF1/TAP; this interaction may be partly involved in DDX3X nuclear export and in NXF1 localization to stress granules. Identified in an mRNP complex, composed of at least DHX9, DDX3X, ELAVL1, HNRNPU, IGF2BP1/2, ILF3, PABPC1, PCBP2, PTBP2, STAU1, STAU2, SYNCRIP and YBX1. The interaction with IGF2BP1/2 is RNA-dependent. Directly interacts with PABPC1/PABP1 in an RNA-independent manner. This interaction increases in stressed cells and decreases during cell recovery. Interacts (via C-terminus) with MAVS/IPS-1; this interaction occurs rapidly, but transiently after Sendai virus infection. The interaction potentiates MAVS-mediated IFNB induction. Interacts with ERCC6/CBS. Interacts with DHX33 in an RNA-independent manner. Interacts with DDX5 in the cytoplasm; this interaction may be more efficient when both proteins are unphosphorylated. Interacts with RIGI/RIG-1. Interacts with IFIH1/MDA5. Interacts with NCAPH; this interaction may be important for the NCAPH localization at condensing chromosomes during mitosis. Interacts with NLRP3 (via NACHT domain) under inflammasome-activating conditions. Interacts with CAPRIN1. Interacts with HNF4A and NR0B2/SHP in an RNA-independent manner; this interaction disrupts the interaction between HNF4 and NR0B2 that forms inactive heterodimers and enhances the formation of active HNF4 homodimers. Interacts with CREBBP/CBP. Interacts with EP300/p300. Interacts with gamma-tubulin. Interacts with phosphorylated TP53. Directly interacts with RELA/p65; this interaction may trap RELA in the cytoplasm, impairing nuclear relocalization upon TNF activating signals. In terms of assembly, (Microbial infection) Interacts with hepatitis B virus (HBV) polymerase in the cytoplasm; this interaction may inhibit DDX3X interaction with the IKBKE/TBK1 complex, and hence impair IKBKE/TBK1-mediated increase in IFNB production. As to quaternary structure, (Microbial infection) Directly interacts with hepatitis C virus (HCV) core protein in the cytoplasm. (Microbial infection) Interacts with vaccinia virus (VACV) protein K7. In terms of assembly, (Microbial infection) Interacts with HIV-1 protein Rev. As to quaternary structure, (Microbial infection) Interacts with Venezuelan equine encephalitis virus non-structural protein 3. In terms of processing, phosphorylated by TBK1; the phosphorylation is required for the synergistic induction of IFNB mediated by TBK1 and DDX3X. Phosphorylated by IKBKE at Ser-102 after ssRNA viral infection; enhances the induction of INFB promoter by IRF3. The cytoplasmic form is highly phosphorylated in the G1/S phase of the cell cycle and much less at G2/M. Phosphorylation by CSNK1E may inhibit RNA-stimulated ATPase activity. Upon stimulation of death receptors, including TNFRSF10B, recruited to receptors and cleaved by caspases. Proteolytic fragments remain associated with the receptors. This cleavage presumably inactivates DDX3X anti-apoptotic function. Post-translationally, ubiquitinated by RNF39 via 'Lys-48'-linked ubiquitination; leading to proteasomal degradation. In terms of tissue distribution, widely expressed. In testis, expressed in spermatids. Expressed in epidermis and liver (at protein level).

The protein localises to the cell membrane. It is found in the nucleus. It localises to the cytoplasm. Its subcellular location is the stress granule. The protein resides in the inflammasome. The protein localises to the cell projection. It is found in the lamellipodium. It localises to the cytoskeleton. Its subcellular location is the microtubule organizing center. The protein resides in the centrosome. It catalyses the reaction ATP + H2O = ADP + phosphate + H(+). In terms of biological role, multifunctional ATP-dependent RNA helicase. The ATPase activity can be stimulated by various ribo-and deoxynucleic acids indicative for a relaxed substrate specificity. In vitro can unwind partially double-stranded DNA with a preference for 5'-single-stranded DNA overhangs. Binds RNA G-quadruplex (rG4s) structures, including those located in the 5'-UTR of NRAS mRNA. Involved in many cellular processes, which do not necessarily require its ATPase/helicase catalytic activities. Involved in transcription regulation. Positively regulates CDKN1A/WAF1/CIP1 transcription in an SP1-dependent manner, hence inhibits cell growth. This function requires its ATPase, but not helicase activity. CDKN1A up-regulation may be cell-type specific. Binds CDH1/E-cadherin promoter and represses its transcription. Potentiates HNF4A-mediated MTTP transcriptional activation; this function requires ATPase, but not helicase activity. Facilitates HNF4A acetylation, possibly catalyzed by CREBBP/EP300, thereby increasing the DNA-binding affinity of HNF4 to its response element. In addition, disrupts the interaction between HNF4 and SHP that forms inactive heterodimers and enhances the formation of active HNF4 homodimers. By promoting HNF4A-induced MTTP expression, may play a role in lipid homeostasis. May positively regulate TP53 transcription. Associates with mRNPs, predominantly with spliced mRNAs carrying an exon junction complex (EJC). Involved in the regulation of translation initiation. Not involved in the general process of translation, but promotes efficient translation of selected complex mRNAs, containing highly structured 5'-untranslated regions (UTR). This function depends on helicase activity. Might facilitate translation by resolving secondary structures of 5'-UTRs during ribosome scanning. Alternatively, may act prior to 43S ribosomal scanning and promote 43S pre-initiation complex entry to mRNAs exhibiting specific RNA motifs, by performing local remodeling of transcript structures located close to the cap moiety. Independently of its ATPase activity, promotes the assembly of functional 80S ribosomes and disassembles from ribosomes prior to the translation elongation process. Positively regulates the translation of cyclin E1/CCNE1 mRNA and consequently promotes G1/S-phase transition during the cell cycle. May activate TP53 translation. Required for endoplasmic reticulum stress-induced ATF4 mRNA translation. Independently of its ATPase/helicase activity, enhances IRES-mediated translation; this activity requires interaction with EIF4E. Independently of its ATPase/helicase activity, has also been shown specifically repress cap-dependent translation, possibly by acting on translation initiation factor EIF4E. Involved in innate immunity, acting as a viral RNA sensor. Binds viral RNAs and promotes the production of type I interferon (IFN-alpha and IFN-beta). Potentiate MAVS/RIGI-mediated induction of IFNB in early stages of infection. Enhances IFNB1 expression via IRF3/IRF7 pathway and participates in NFKB activation in the presence of MAVS and TBK1. Involved in TBK1 and IKBKE-dependent IRF3 activation leading to IFNB induction, acts as a scaffolding adapter that links IKBKE and IRF3 and coordinates their activation. Involved in the TLR7/TLR8 signaling pathway leading to type I interferon induction, including IFNA4 production. In this context, acts as an upstream regulator of IRF7 activation by MAP3K14/NIK and CHUK/IKKA. Stimulates CHUK autophosphorylation and activation following physiological activation of the TLR7 and TLR8 pathways, leading to MAP3K14/CHUK-mediated activatory phosphorylation of IRF7. Also stimulates MAP3K14/CHUK-dependent NF-kappa-B signaling. Negatively regulates TNF-induced IL6 and IL8 expression, via the NF-kappa-B pathway. May act by interacting with RELA/p65 and trapping it in the cytoplasm. May also bind IFNB promoter; the function is independent of IRF3. Involved in both stress and inflammatory responses. Independently of its ATPase/helicase activity, required for efficient stress granule assembly through its interaction with EIF4E, hence promotes survival in stressed cells. Independently of its helicase activity, regulates NLRP3 inflammasome assembly through interaction with NLRP3 and hence promotes cell death by pyroptosis during inflammation. This function is independent of helicase activity. Therefore DDX3X availability may be used to interpret stress signals and choose between pro-survival stress granules and pyroptotic NLRP3 inflammasomes and serve as a live-or-die checkpoint in stressed cells. In association with GSK3A/B, negatively regulates extrinsic apoptotic signaling pathway via death domain receptors, including TNFRSF10B, slowing down the rate of CASP3 activation following death receptor stimulation. Cleavage by caspases may inactivate DDX3X and relieve the inhibition. Independently of its ATPase/helicase activity, allosteric activator of CSNK1E. Stimulates CSNK1E-mediated phosphorylation of DVL2, thereby involved in the positive regulation of Wnt/beta-catenin signaling pathway. Also activates CSNK1A1 and CSNK1D in vitro, but it is uncertain if these targets are physiologically relevant. ATPase and casein kinase-activating functions are mutually exclusive. May be involved in mitotic chromosome segregation. Functionally, (Microbial infection) Facilitates hepatitis C virus (HCV) replication. During infection, HCV core protein inhibits the interaction between MAVS and DDX3X and therefore impairs MAVS-dependent INFB induction and might recruit DDX3X to HCV replication complex. Its function is as follows. (Microbial infection) Facilitates HIV-1 replication. Acts as a cofactor for XPO1-mediated nuclear export of HIV-1 Rev RNAs. This function is strongly stimulated in the presence of TBK1 and requires DDX3X ATPase activity. (Microbial infection) Facilitates Zika virus (ZIKV) replication. In terms of biological role, (Microbial infection) Facilitates Dengue virus (DENV) replication. Functionally, (Microbial infection) Facilitates Venezuelan equine encephalitis virus (VEEV) replication. This is ATP-dependent RNA helicase DDX3X (DDX3X) from Homo sapiens (Human).